We begin with the raw amino-acid sequence, 222 residues long: Protein-L-isoaspartate O-methyltransferase (222 aa).

Serine 69 is an active-site residue.

The protein belongs to the methyltransferase superfamily. L-isoaspartyl/D-aspartyl protein methyltransferase family.

Its subcellular location is the cytoplasm. It catalyses the reaction [protein]-L-isoaspartate + S-adenosyl-L-methionine = [protein]-L-isoaspartate alpha-methyl ester + S-adenosyl-L-homocysteine. Its function is as follows. Catalyzes the methyl esterification of L-isoaspartyl residues in peptides and proteins that result from spontaneous decomposition of normal L-aspartyl and L-asparaginyl residues. It plays a role in the repair and/or degradation of damaged proteins. The chain is Protein-L-isoaspartate O-methyltransferase from Nitrosomonas eutropha (strain DSM 101675 / C91 / Nm57).